Reading from the N-terminus, the 294-residue chain is NAD kinase (294 aa).

Asp-74 serves as the catalytic Proton acceptor. NAD(+)-binding positions include 74–75 (DG), 148–149 (NE), His-159, Arg-176, Asp-178, and 189–194 (TAYSLS).

It belongs to the NAD kinase family. It depends on a divalent metal cation as a cofactor.

Its subcellular location is the cytoplasm. It carries out the reaction NAD(+) + ATP = ADP + NADP(+) + H(+). Its function is as follows. Involved in the regulation of the intracellular balance of NAD and NADP, and is a key enzyme in the biosynthesis of NADP. Catalyzes specifically the phosphorylation on 2'-hydroxyl of the adenosine moiety of NAD to yield NADP. The chain is NAD kinase from Pseudoalteromonas translucida (strain TAC 125).